We begin with the raw amino-acid sequence, 159 residues long: Phosphopantetheine adenylyltransferase (159 aa).

H16 is an ATP binding site. K40, M72, and R86 together coordinate substrate. ATP-binding positions include 87–89 (GLR), E97, and 122–128 (YQYLSAS).

Belongs to the bacterial CoaD family. In terms of assembly, homohexamer. Mg(2+) serves as cofactor.

The protein localises to the cytoplasm. It carries out the reaction (R)-4'-phosphopantetheine + ATP + H(+) = 3'-dephospho-CoA + diphosphate. It participates in cofactor biosynthesis; coenzyme A biosynthesis; CoA from (R)-pantothenate: step 4/5. Its function is as follows. Reversibly transfers an adenylyl group from ATP to 4'-phosphopantetheine, yielding dephospho-CoA (dPCoA) and pyrophosphate. In Dehalococcoides mccartyi (strain CBDB1), this protein is Phosphopantetheine adenylyltransferase.